We begin with the raw amino-acid sequence, 63 residues long: Alpha-conotoxin-like Am1.6 (63 aa).

Residues 1–21 form the signal peptide; it reads MGMRMMFTVFLLVVLATTVVS. A propeptide spanning residues 22-46 is cleaved from the precursor; that stretch reads FTSYRASDGRNAAAKASDLIALTVR. The ser-Xaa-Pro motif, crucial for potent interaction with nAChR stretch occupies residues 50–52; the sequence is SRP.

The protein belongs to the conotoxin A superfamily. In terms of processing, is not hydroxylated. Post-translationally, contains 2 disulfide bonds. In terms of tissue distribution, expressed by the venom duct.

It is found in the secreted. Alpha-conotoxins act on postsynaptic membranes, they bind to the nicotinic acetylcholine receptors (nAChR) and thus inhibit them. The polypeptide is Alpha-conotoxin-like Am1.6 (Conus amadis (Amadis cone)).